Consider the following 278-residue polypeptide: Large ribosomal subunit protein uL2 (278 aa).

Composition is skewed to basic residues over residues 210–219 (RKRWLGKRPQ) and 252–263 (KKSRGIKTRNSK). Residues 210–278 (RKRWLGKRPQ…LIIRHRKGNK (69 aa)) are disordered.

The protein belongs to the universal ribosomal protein uL2 family. Part of the 50S ribosomal subunit. Forms a bridge to the 30S subunit in the 70S ribosome.

In terms of biological role, one of the primary rRNA binding proteins. Required for association of the 30S and 50S subunits to form the 70S ribosome, for tRNA binding and peptide bond formation. It has been suggested to have peptidyltransferase activity; this is somewhat controversial. Makes several contacts with the 16S rRNA in the 70S ribosome. The chain is Large ribosomal subunit protein uL2 from Lactobacillus gasseri (strain ATCC 33323 / DSM 20243 / BCRC 14619 / CIP 102991 / JCM 1131 / KCTC 3163 / NCIMB 11718 / NCTC 13722 / AM63).